Consider the following 683-residue polypeptide: Solute carrier family 28 member 3 (683 aa).

The segment at 1–71 (MSAFKARGVE…EEEEEGEEDQ (71 aa)) is disordered. The Cytoplasmic segment spans residues 1–97 (MSAFKARGVE…FYKRNKKIIH (97 aa)). Residues 60–71 (DNEEEEEGEEDQ) are compositionally biased toward acidic residues. The chain crosses the membrane as a helical span at residues 98–118 (YTFLGLLLVGYFALVIAACIV). Residues 119–123 (NFKQS) are Extracellular-facing. The helical transmembrane segment at 124 to 144 (LALLVLTLIAIFFFFWDLFIA) threads the bilayer. The Cytoplasmic segment spans residues 145 to 168 (KYGDKIAEALKPCQKFLDNHWSII). A helical membrane pass occupies residues 169-189 (RWFVYGALLLAVILWLTLDTA). The Extracellular portion of the chain corresponds to 190–192 (KRG). A helical membrane pass occupies residues 193–214 (ANQVIPFFGLILYILLVFIFSK). Over 215–222 (HPTKVRWR) the chain is Cytoplasmic. A helical membrane pass occupies residues 223–242 (IVIWGLLLQFIFGLIILRTK). Topologically, residues 243-279 (PGLDAFNWLGIQVQTFLKYTDAGSRFLFGDDFQDHFF) are extracellular. Residues 280 to 300 (AFAVLPIVIFFSTVMSMMYYL) traverse the membrane as a helical segment. Over 301–324 (GLMQWLILKVGWLMQITMGTSPME) the chain is Cytoplasmic. The helical intramembrane region spans 325–343 (SMVSAGNIFVGQTESPLLI). The Cytoplasmic segment spans residues 344–356 (RPYLADLTISEMH). Residues 357–379 (SVMSSGFATIAGSVLGAYISLGI) form a helical membrane-spanning segment. At 380-381 (PA) the chain is on the extracellular side. Residues 382–403 (AHLLTASVMSAPAALAISKTFW) form a helical membrane-spanning segment. The Cytoplasmic segment spans residues 404–438 (PETKKSKNSTQTSIKLEKGQENNLVEAASQGASAA). The helical transmembrane segment at 439 to 464 (VPLVANIAANLIAFLAVLAFINATLS) threads the bilayer. Topologically, residues 465-502 (WLGSMFNYPQFSFEIICSYVLMPFAFMMGVNYDDSFLV) are extracellular. An intramembrane region (helical) is located at residues 503-522 (AELLGMKTFFNEFVAYQRLS). Topologically, residues 523–561 (EYIHNRESGGPLFVDGVRQYMSVRSEAIATYALCGFANF) are extracellular. A helical membrane pass occupies residues 562–572 (GSLGIMIGGLS). The Cytoplasmic segment spans residues 573-585 (SLAPHRKSDIASC). The helical transmembrane segment at 586–608 (GIRALIAGTIACFSTACIAGVLY) threads the bilayer. At 609-683 (IPELYCPNLL…GFNCSEVRPE (75 aa)) the chain is on the extracellular side.

The protein belongs to the concentrative nucleoside transporter (CNT) (TC 2.A.41) family. In terms of assembly, homotrimer.

The protein localises to the cell membrane. It carries out the reaction thymidine(out) + 2 Na(+)(out) = thymidine(in) + 2 Na(+)(in). It catalyses the reaction cytidine(out) + 2 Na(+)(out) = cytidine(in) + 2 Na(+)(in). The catalysed reaction is uridine(out) + 2 Na(+)(out) = uridine(in) + 2 Na(+)(in). The enzyme catalyses adenosine(out) + 2 Na(+)(out) = adenosine(in) + 2 Na(+)(in). It carries out the reaction guanosine(out) + 2 Na(+)(out) = guanosine(in) + 2 Na(+)(in). It catalyses the reaction inosine(out) + 2 Na(+)(out) = inosine(in) + 2 Na(+)(in). Sodium-dependent, pyrimidine- and purine-selective. Involved in the homeostasis of endogenous nucleosides. Exhibits the transport characteristics of the nucleoside transport system cib or N3 subtype (N3/cib) (with marked transport of both thymidine and inosine). Employs a 2:1 sodium/nucleoside ratio. Also able to transport gemcitabine, 3'-azido-3'-deoxythymidine (AZT), ribavirin and 3-deazauridine. In Eptatretus stoutii (Pacific hagfish), this protein is Solute carrier family 28 member 3 (SLC28A3).